The following is a 209-amino-acid chain: NAD(P)H dehydrogenase (quinone) (209 aa).

One can recognise a Flavodoxin-like domain in the interval 4–199 (VNIIFYSMYG…AMARYQGRHV (196 aa)). Residues 10 to 15 (SMYGHV) and 87 to 89 (TRY) each bind FMN. Position 12 (Tyr12) interacts with NAD(+). Residue Trp107 participates in substrate binding. Residues 122–128 (SSGTQHG) and His143 contribute to the FMN site.

Belongs to the WrbA family. FMN serves as cofactor.

It catalyses the reaction a quinone + NADH + H(+) = a quinol + NAD(+). The catalysed reaction is a quinone + NADPH + H(+) = a quinol + NADP(+). The protein is NAD(P)H dehydrogenase (quinone) of Methanosarcina acetivorans (strain ATCC 35395 / DSM 2834 / JCM 12185 / C2A).